We begin with the raw amino-acid sequence, 438 residues long: Minor myo-inositol transporter IolF (438 aa).

Transmembrane regions (helical) follow at residues 15 to 35, 49 to 69, 86 to 106, 108 to 128, 147 to 167, 171 to 191, 230 to 250, 268 to 288, 295 to 312, 317 to 334, 359 to 379, and 387 to 407; these read IAAALANYIDAGSIVAGSAGL, IGLLGALSANAISAAVGALLG, MLVYALGICLVLFGVNFPMLL, GYIIIGLSVGADITASWTIIA, WAAGAVVVLLLSVLAGDLGLL, IVFAHLLVIALITYILRIRLP, ILFLMGVYLVWNLAAGVMGFF, LLQMGLFIFTGLGVALIFMPF, TVFGIAAFMAVIGWTLFL, GLPILLLFIVVIGINNGA, LMFFLVRISIGIWSLFVPMII, and MAAILLGCVTASMIIGLLFAP.

Belongs to the major facilitator superfamily. Sugar transporter (TC 2.A.1.1) family.

The protein resides in the cell membrane. The protein operates within polyol metabolism; myo-inositol degradation into acetyl-CoA. Functionally, minor myo-inositol uptake transporter. The protein is Minor myo-inositol transporter IolF (iolF) of Bacillus subtilis (strain 168).